The primary structure comprises 339 residues: UDP-N-acetylenolpyruvoylglucosamine reductase (339 aa).

Residues 18–189 (GIDVKARYFS…LRVRFALTRT (172 aa)) enclose the FAD-binding PCMH-type domain. The active site involves Arg166. The active-site Proton donor is Ser239. Residue Glu335 is part of the active site.

This sequence belongs to the MurB family. Requires FAD as cofactor.

Its subcellular location is the cytoplasm. It carries out the reaction UDP-N-acetyl-alpha-D-muramate + NADP(+) = UDP-N-acetyl-3-O-(1-carboxyvinyl)-alpha-D-glucosamine + NADPH + H(+). The protein operates within cell wall biogenesis; peptidoglycan biosynthesis. Functionally, cell wall formation. The sequence is that of UDP-N-acetylenolpyruvoylglucosamine reductase from Pseudomonas putida (strain ATCC 47054 / DSM 6125 / CFBP 8728 / NCIMB 11950 / KT2440).